We begin with the raw amino-acid sequence, 458 residues long: MGKEKSHINVVVIGHVDSGKSTTTGHLIYKCGGIDKRTIEKFEKEAAELGKGSFKYAWVLDKLKAERERGITIDIALWKFETPKYQVTVIDAPGHRDFIKNMITGTSQADCAILIIAGGVGEFEAGISKDGQTREHALLAFTLGVRQLIVAVNKMDSVKWDESRFQEIVKETSNFIKKVGYNPKTVPFVPISGWNGDNMIEATTNAPWYKGWEKETKAGVVKGKTLLEAIDAIEQPSRPTDKPLRLPLQDVYKIGGIGTVPVGRVETGVIKPGMVVTFAPAGVTTEVKSVEMHHEQLEQGVPGDNVGFNVKNVSVKEIRRGNVCGDAKNDPPKGCASFNATVIVLNHPGQISAGYSPVLDCHTAHIACRFDELLEKNDRRSGKKLEDHPKFLKSGDAALVKFVPSKPMCVEAFSEYPPLGRFAVRDMRQTVAVGVIKSVDKTEKAAKVTKAAQKAAKK.

A N,N,N-trimethylglycine; by EFM7 modification is found at Gly-2. Lys-3 is subject to N6,N6-dimethyllysine; by EFM7; alternate. Lys-3 carries the N6-methyllysine; by EFM7; alternate modification. The tr-type G domain occupies 5 to 240 (KSHINVVVIG…DAIEQPSRPT (236 aa)). The tract at residues 14 to 21 (GHVDSGKS) is G1. Position 18 is a phosphoserine (Ser-18). Ser-21 and Thr-22 together coordinate GTP. Lys-30 is modified (N6-methyllysine; by EFM1). Residues 70–74 (GITID) are G2. Thr-72 bears the Phosphothreonine mark. Lys-79 is modified (N6,N6,N6-trimethyllysine; by EFM5). Position 82 is a phosphothreonine (Thr-82). Positions 91–94 (DAPG) are G3. GTP is bound by residues Asn-153, Lys-154, and Asp-156. Residues 153–156 (NKMD) are G4. Ser-163 carries the phosphoserine modification. Positions 192, 193, and 194 each coordinate GTP. Residues 192-194 (SGW) form a G5 region. Glycyl lysine isopeptide (Lys-Gly) (interchain with G-Cter in ubiquitin) cross-links involve residues Lys-224, Lys-242, and Lys-253. At Thr-259 the chain carries Phosphothreonine. Lys-271 is covalently cross-linked (Glycyl lysine isopeptide (Lys-Gly) (interchain with G-Cter in ubiquitin)). Ser-289 carries the post-translational modification Phosphoserine. N6,N6-dimethyllysine; by EFM4; alternate is present on Lys-316. At Lys-316 the chain carries N6-methyllysine; by EFM4; alternate. Lys-390 is subject to N6-methyllysine; by EFM6. Lys-393 participates in a covalent cross-link: Glycyl lysine isopeptide (Lys-Gly) (interchain with G-Cter in ubiquitin). Ser-414 carries the phosphoserine modification. At Thr-430 the chain carries Phosphothreonine. Lys-437 participates in a covalent cross-link: Glycyl lysine isopeptide (Lys-Gly) (interchain with G-Cter in ubiquitin). At Lys-458 the chain carries Lysine methyl ester.

Belongs to the TRAFAC class translation factor GTPase superfamily. Classic translation factor GTPase family. EF-Tu/EF-1A subfamily. The eukaryotic elongation factor 1 complex (eEF1) is probably a heterohexamer. Two trimeric complexes, each composed of eEF1A (TEF1 or TEF2), eEF1Balpha (EFB1) and eEF1Bgamma (CAM1 or TEF4), are probably dimerized via the eF1Bgamma subunits. Interacts with eEF1Balpha; the interaction is direct. Interacts with GCN2 (via C-terminus); this interaction is direct, occurs in amino acid-repleted cells, may be stabilized in a ribosome-dependent manner, reduces GCN2-mediated eIF-2-alpha phosphorylation and is lost in amino acid-starved cells and by uncharged tRNAs. Interacts with CEX1. Interacts with elongation factor 3 (YEF3 or HEF3). Interacts with NAP1. Interacts with SRV2. Interacts with chaperone ZPR1; the interaction is required for its proper folding. Binds to actin and forms a ternary complex with BNI1 and profilin. Interacts with the proteasome, probably via RPT1. Associates with ribosomes. Post-translationally, S-thiolated in response to oxidative stress, probably inhibiting the protein and causing a reduction in protein synthesis. In terms of processing, glutaminylated at Glu-45. An L-glutamine is linked to Glu-45 via the alpha amino group. This glutaminylation is yeast-specific and not essential for the normal functions of eEF1A. However, eEF1A glutaminylation slightly reduced growth under antibiotic-induced translational stress conditions.

It is found in the cytoplasm. The protein resides in the cytoskeleton. The protein operates within protein biosynthesis; polypeptide chain elongation. Its activity is regulated as follows. Inhibited by narciclasine. Functionally, GTP-binding component of the eukaryotic elongation factor 1 complex (eEF1). In its active GTP-bound form, binds to and delivers aminoacyl-tRNA to the A-site of ribosomes during protein biosynthesis. In the presence of a correct codon-anticodon match between the aminoacyl-tRNA and the A-site codon of the ribosome-bound mRNA, the ribosome acts as a GTPase activator and the GTP is hydrolyzed. The inactive GDP-bound form leaves the ribosome and must be recycled by its guanine nucleotide exchange factor (GEF) (eEF1B subcomplex) before binding another molecule of aminoacyl-tRNA. Required for nuclear export of aminoacyl-tRNAs. May also be involved in translational quality control by targeting cotranslationally damaged proteins to the proteasome. Also exhibits actin filament-binding and -bundling activities and is involved in cytoskeleton organization. Plays a role as a negative regulator of GCN2 kinase activity by inhibiting GCN2-mediated eIF-2-alpha phosphorylation in amino acid-repleted cells. The polypeptide is Elongation factor 1-alpha (TEF1) (Saccharomyces cerevisiae (strain ATCC 204508 / S288c) (Baker's yeast)).